The sequence spans 284 residues: 2-dehydro-3-deoxyphosphooctonate aldolase (284 aa).

This sequence belongs to the KdsA family.

The protein localises to the cytoplasm. The catalysed reaction is D-arabinose 5-phosphate + phosphoenolpyruvate + H2O = 3-deoxy-alpha-D-manno-2-octulosonate-8-phosphate + phosphate. It functions in the pathway carbohydrate biosynthesis; 3-deoxy-D-manno-octulosonate biosynthesis; 3-deoxy-D-manno-octulosonate from D-ribulose 5-phosphate: step 2/3. Its pathway is bacterial outer membrane biogenesis; lipopolysaccharide biosynthesis. The polypeptide is 2-dehydro-3-deoxyphosphooctonate aldolase (Escherichia coli O6:K15:H31 (strain 536 / UPEC)).